The following is a 159-amino-acid chain: Phosphopantetheine adenylyltransferase (159 aa).

Residue Ser9 coordinates substrate. ATP contacts are provided by residues 9–10 and His17; that span reads SF. Residues Lys41, Leu73, and Arg87 each coordinate substrate. ATP is bound by residues 88 to 90, Glu98, and 123 to 129; these read GLR and YSYVSSS.

Belongs to the bacterial CoaD family. As to quaternary structure, homohexamer. Mg(2+) serves as cofactor.

The protein resides in the cytoplasm. The enzyme catalyses (R)-4'-phosphopantetheine + ATP + H(+) = 3'-dephospho-CoA + diphosphate. Its pathway is cofactor biosynthesis; coenzyme A biosynthesis; CoA from (R)-pantothenate: step 4/5. Reversibly transfers an adenylyl group from ATP to 4'-phosphopantetheine, yielding dephospho-CoA (dPCoA) and pyrophosphate. This Shouchella clausii (strain KSM-K16) (Alkalihalobacillus clausii) protein is Phosphopantetheine adenylyltransferase.